A 122-amino-acid polypeptide reads, in one-letter code: Large ribosomal subunit protein uL14 (122 aa).

It belongs to the universal ribosomal protein uL14 family. In terms of assembly, part of the 50S ribosomal subunit. Forms a cluster with proteins L3 and L19. In the 70S ribosome, L14 and L19 interact and together make contacts with the 16S rRNA in bridges B5 and B8.

Binds to 23S rRNA. Forms part of two intersubunit bridges in the 70S ribosome. In Chlamydia muridarum (strain MoPn / Nigg), this protein is Large ribosomal subunit protein uL14.